We begin with the raw amino-acid sequence, 307 residues long: 4-hydroxybenzoate octaprenyltransferase (307 aa).

9 helical membrane passes run 19-39, 48-68, 105-125, 127-147, 150-170, 172-192, 221-241, 243-263, and 282-302; these read PVGIELLLWPTLWGVLFAAMG, VTAGLPSLSIFVVFALGAILM, AIAAFLVLVLLSASLLLFLPI, VFYWSFAAVILAFIYPFMKRY, LPQVFLAAAFGWAIPMAYVAI, GAADIWCWLLFLAYMCWTVAY, VIIISLLQILFLVIMGAVMWH, FVPTSLGITPVFGLALVAMMF, and FLANIWVGRYVFALIAIACVW.

It belongs to the UbiA prenyltransferase family. The cofactor is Mg(2+).

It is found in the cell inner membrane. The catalysed reaction is all-trans-octaprenyl diphosphate + 4-hydroxybenzoate = 4-hydroxy-3-(all-trans-octaprenyl)benzoate + diphosphate. The protein operates within cofactor biosynthesis; ubiquinone biosynthesis. Functionally, catalyzes the prenylation of para-hydroxybenzoate (PHB) with an all-trans polyprenyl group. Mediates the second step in the final reaction sequence of ubiquinone-8 (UQ-8) biosynthesis, which is the condensation of the polyisoprenoid side chain with PHB, generating the first membrane-bound Q intermediate 3-octaprenyl-4-hydroxybenzoate. The polypeptide is 4-hydroxybenzoate octaprenyltransferase (Psychrobacter arcticus (strain DSM 17307 / VKM B-2377 / 273-4)).